A 309-amino-acid polypeptide reads, in one-letter code: Cysteinyl leukotriene receptor 2 (309 aa).

Topologically, residues 1 to 26 are extracellular; sequence MEVTGTPSSYSNRNCTIENFKKEFYP. Asn-14 carries N-linked (GlcNAc...) asparagine glycosylation. A helical transmembrane segment spans residues 27-47; sequence IIYLIIFFWGALGNGFSIYVF. The Cytoplasmic portion of the chain corresponds to 48-56; that stretch reads LQTCKKSTS. The chain crosses the membrane as a helical span at residues 57 to 77; that stretch reads VNVFMLNLATSDFLFISTLPF. Residues 78–98 are Extracellular-facing; it reads RADYYFRGSNWIFGDLACRVM. The cysteines at positions 95 and 171 are disulfide-linked. A helical transmembrane segment spans residues 99–119; that stretch reads SYSLYVNMYTSIYFLTVLSVV. The Cytoplasmic segment spans residues 120-138; the sequence is RFLATVHPFRMFHVTSVRS. A helical transmembrane segment spans residues 139–159; it reads AWILCGIIWVFIMASSALLLV. Residues 160 to 187 are Extracellular-facing; the sequence is NGQEEKDNIISCLELSPQKFKSLLIMNH. The helical transmembrane segment at 188 to 208 threads the bilayer; it reads IAVAVGFLLPFLTLTVCYLLI. Residues 209–229 lie on the Cytoplasmic side of the membrane; that stretch reads IRILLKAEIPESGPRAAHRKA. A helical transmembrane segment spans residues 230–250; sequence LTTIVIAMITFLLCFLPYHAL. The Extracellular segment spans residues 251 to 271; that stretch reads RTLHLVTWDKDSCGDVLHKAT. The chain crosses the membrane as a helical span at residues 272-292; that stretch reads VITLTMAAANSCFNPFLYYFA. Topologically, residues 293 to 309 are cytoplasmic; it reads GENFKARLRAIFSKVHL.

The protein belongs to the G-protein coupled receptor 1 family. In terms of tissue distribution, widely expressed at low levels, with highest expression in the spleen, thymus and adrenal gland, and lower in the kidney, brain and peripheral blood leukocytes.

Its subcellular location is the cell membrane. Receptor for cysteinyl leukotrienes. The response is mediated via a G-protein that activates a phosphatidylinositol-calcium second messenger system. The rank order of affinities for the leukotrienes is LTC4 = LTD4 &gt;&gt; LTE4. The polypeptide is Cysteinyl leukotriene receptor 2 (Cysltr2) (Mus musculus (Mouse)).